A 245-amino-acid chain; its full sequence is Phycocyanobilin:ferredoxin oxidoreductase (245 aa).

The protein belongs to the HY2 family.

It catalyses the reaction (2R,3Z)-phycocyanobilin + 4 oxidized [2Fe-2S]-[ferredoxin] = biliverdin IXalpha + 4 reduced [2Fe-2S]-[ferredoxin] + 4 H(+). In terms of biological role, catalyzes the four-electron reduction of biliverdin IX-alpha (2-electron reduction at both the A and D rings); the reaction proceeds via an isolatable 2-electron intermediate, 181,182-dihydrobiliverdin. The protein is Phycocyanobilin:ferredoxin oxidoreductase of Trichormus variabilis (strain ATCC 29413 / PCC 7937) (Anabaena variabilis).